The sequence spans 123 residues: Transmembrane protein 254 (123 aa).

Transmembrane regions (helical) follow at residues 15 to 35 (LFWF…VFWP), 63 to 83 (NGYW…LVLC), and 95 to 115 (LLWF…LFAY).

It localises to the membrane. In Rattus norvegicus (Rat), this protein is Transmembrane protein 254 (Tmem254).